The following is a 323-amino-acid chain: Acetyl-coenzyme A carboxylase carboxyl transferase subunit alpha (323 aa).

In terms of domain architecture, CoA carboxyltransferase C-terminal spans 39 to 293; the sequence is RLSKKSQQLT…RRALADSLRQ (255 aa).

It belongs to the AccA family. Acetyl-CoA carboxylase is a heterohexamer composed of biotin carboxyl carrier protein (AccB), biotin carboxylase (AccC) and two subunits each of ACCase subunit alpha (AccA) and ACCase subunit beta (AccD).

Its subcellular location is the cytoplasm. It catalyses the reaction N(6)-carboxybiotinyl-L-lysyl-[protein] + acetyl-CoA = N(6)-biotinyl-L-lysyl-[protein] + malonyl-CoA. It participates in lipid metabolism; malonyl-CoA biosynthesis; malonyl-CoA from acetyl-CoA: step 1/1. Component of the acetyl coenzyme A carboxylase (ACC) complex. First, biotin carboxylase catalyzes the carboxylation of biotin on its carrier protein (BCCP) and then the CO(2) group is transferred by the carboxyltransferase to acetyl-CoA to form malonyl-CoA. In Burkholderia lata (strain ATCC 17760 / DSM 23089 / LMG 22485 / NCIMB 9086 / R18194 / 383), this protein is Acetyl-coenzyme A carboxylase carboxyl transferase subunit alpha.